We begin with the raw amino-acid sequence, 334 residues long: GTPase Obg (334 aa).

The Obg domain maps to 4–162 (FDFIDEVKKY…GWIKLELKLL (159 aa)). One can recognise an OBG-type G domain in the interval 163–330 (AEVGLVGFPN…FKDKIWKLLH (168 aa)). Residues 169 to 176 (GFPNAGKS), 194 to 198 (FTTLV), 216 to 219 (DMPG), 284 to 287 (SKLD), and 311 to 313 (SSV) each bind GTP. Positions 176 and 196 each coordinate Mg(2+).

It belongs to the TRAFAC class OBG-HflX-like GTPase superfamily. OBG GTPase family. In terms of assembly, monomer. The cofactor is Mg(2+).

It localises to the cytoplasm. Functionally, an essential GTPase which binds GTP, GDP and possibly (p)ppGpp with moderate affinity, with high nucleotide exchange rates and a fairly low GTP hydrolysis rate. Plays a role in control of the cell cycle, stress response, ribosome biogenesis and in those bacteria that undergo differentiation, in morphogenesis control. The sequence is that of GTPase Obg from Amoebophilus asiaticus (strain 5a2).